The primary structure comprises 153 residues: UPF0756 membrane protein lin1603 (153 aa).

4 helical membrane-spanning segments follow: residues 6–26, 54–74, 80–100, and 117–137; these read MLFL…SLII, WGVT…QIGF, SFKS…SILA, and LVFG…GPVI.

Belongs to the UPF0756 family.

It is found in the cell membrane. The protein is UPF0756 membrane protein lin1603 of Listeria innocua serovar 6a (strain ATCC BAA-680 / CLIP 11262).